The primary structure comprises 73 residues: Protein SlyX homolog (73 aa).

The protein belongs to the SlyX family.

This chain is Protein SlyX homolog, found in Histophilus somni (strain 129Pt) (Haemophilus somnus).